The chain runs to 275 residues: Shikimate dehydrogenase (NADP(+)) (275 aa).

Shikimate is bound by residues 17–19 and threonine 64; that span reads SKS. Catalysis depends on lysine 68, which acts as the Proton acceptor. Glutamate 80 contributes to the NADP(+) binding site. Asparagine 89 and aspartate 105 together coordinate shikimate. NADP(+) contacts are provided by residues 129-133, 152-157, and methionine 216; these read GAGGA and NRTFFK. Residue tyrosine 218 coordinates shikimate. Position 240 (glycine 240) interacts with NADP(+).

The protein belongs to the shikimate dehydrogenase family. Homodimer.

The enzyme catalyses shikimate + NADP(+) = 3-dehydroshikimate + NADPH + H(+). Its pathway is metabolic intermediate biosynthesis; chorismate biosynthesis; chorismate from D-erythrose 4-phosphate and phosphoenolpyruvate: step 4/7. Functionally, involved in the biosynthesis of the chorismate, which leads to the biosynthesis of aromatic amino acids. Catalyzes the reversible NADPH linked reduction of 3-dehydroshikimate (DHSA) to yield shikimate (SA). This chain is Shikimate dehydrogenase (NADP(+)), found in Pectobacterium atrosepticum (strain SCRI 1043 / ATCC BAA-672) (Erwinia carotovora subsp. atroseptica).